The following is a 291-amino-acid chain: 5-hydroxytryptamine receptor 1D (291 aa).

Residues 30-54 (LCDIWLSSDITCCTASILHLCVIAL) form a helical membrane-spanning segment. The cysteines at positions 31 and 108 are disulfide-linked. D38 and C42 together coordinate serotonin. Positions 55–57 (DRY) match the DRY motif; important for ligand-induced conformation changes motif. A helical membrane pass occupies residues 75–96 (AAAMIAIVWAISICISIPPLFW). An N-linked (GlcNAc...) asparagine glycan is attached at N111. 3 consecutive transmembrane segments (helical) span residues 115-138 (ISYTIYSTCGAFYIPSLLLIILYG), 221-246 (KTLGIILGAFIICWLPFFVASLVLPI), and 256-279 (ALFDFFTWLGYLNSLINPIIYTVF). Serotonin is bound at residue S241. Positions 272 to 276 (NPIIY) match the NPxxY motif; important for ligand-induced conformation changes and signaling motif.

The protein belongs to the G-protein coupled receptor 1 family. In terms of assembly, homodimer. Heterodimer with HTR1B.

It is found in the cell membrane. In terms of biological role, G-protein coupled receptor for 5-hydroxytryptamine (serotonin). Also functions as a receptor for ergot alkaloid derivatives, various anxiolytic and antidepressant drugs and other psychoactive substances. Ligand binding causes a conformation change that triggers signaling via guanine nucleotide-binding proteins (G proteins) and modulates the activity of downstream effectors, such as adenylate cyclase. HTR1D is coupled to G(i)/G(o) G alpha proteins and mediates inhibitory neurotransmission by inhibiting adenylate cyclase activity. Regulates the release of 5-hydroxytryptamine in the brain, and thereby affects neural activity. May also play a role in regulating the release of other neurotransmitters. May play a role in vasoconstriction. The chain is 5-hydroxytryptamine receptor 1D (HTR1D) from Sus scrofa (Pig).